The sequence spans 506 residues: Protein P7 (506 aa).

2 RNA-binding regions span residues 128 to 249 (ISYL…GKRE) and 325 to 355 (DGSYGNRVIISHKMSRLSNGGVKIIGRFKIS).

Belongs to the phytoreovirus protein P7 family.

Its subcellular location is the virion. It is found in the host cytoplasm. Its function is as follows. Probable component of the transcriptional machinery present in the inner capsid. Displays dsRNA binding activity and may play an important role in the sorting of viral RNA and virion assembly. Together with the RNA-directed RNA polymerase P1 and capping enzyme P5, forms an transcriptional complex positioned near the channels situated at each of the five-fold vertices of the core. The sequence is that of Protein P7 from Alopecurus aequalis (Barnyard grass).